Consider the following 420-residue polypeptide: Signal recognition particle receptor FtsY (420 aa).

Over residues 28–62 the composition is skewed to basic and acidic residues; the sequence is DLDRAMGKVAPDNKKTRDAKAAADARLAAEAEEAK. Residues 28-118 form a disordered region; sequence DLDRAMGKVA…PETPESVGSR (91 aa). Low complexity predominate over residues 63–104; it reads AATAAEPAKSAESAKAEPAPAAQAEPEPAAAPKPESQPASKP. Residues 227-234, 310-314, and 372-375 each bind GTP; these read GVNGTGKT, DTAGR, and SKLD.

The protein belongs to the GTP-binding SRP family. FtsY subfamily. In terms of assembly, part of the signal recognition particle protein translocation system, which is composed of SRP and FtsY.

The protein resides in the cell membrane. It is found in the cytoplasm. It carries out the reaction GTP + H2O = GDP + phosphate + H(+). Involved in targeting and insertion of nascent membrane proteins into the cytoplasmic membrane. Acts as a receptor for the complex formed by the signal recognition particle (SRP) and the ribosome-nascent chain (RNC). The protein is Signal recognition particle receptor FtsY of Bifidobacterium longum (strain NCC 2705).